A 250-amino-acid polypeptide reads, in one-letter code: Ribosomal RNA small subunit methyltransferase J (250 aa).

Residues 101 to 102 (RD), 117 to 118 (ER), 153 to 154 (SS), and D171 contribute to the S-adenosyl-L-methionine site.

The protein belongs to the methyltransferase superfamily. RsmJ family.

It localises to the cytoplasm. It catalyses the reaction guanosine(1516) in 16S rRNA + S-adenosyl-L-methionine = N(2)-methylguanosine(1516) in 16S rRNA + S-adenosyl-L-homocysteine + H(+). Functionally, specifically methylates the guanosine in position 1516 of 16S rRNA. In Cronobacter sakazakii (strain ATCC BAA-894) (Enterobacter sakazakii), this protein is Ribosomal RNA small subunit methyltransferase J.